The following is a 67-amino-acid chain: Conotoxin Lt5.9 (67 aa).

The first 19 residues, 1 to 19 (MLCLPVFIILLLLASPAAP), serve as a signal peptide directing secretion. Residues 20–46 (KSFETKVQSDLTRTDGNMETEENLGEV) constitute a propeptide that is removed on maturation.

Belongs to the conotoxin T superfamily. Contains 2 disulfide bonds that can be either 'C1-C3, C2-C4' or 'C1-C4, C2-C3', since these disulfide connectivities have been observed for conotoxins with cysteine framework V (for examples, see AC P0DQQ7 and AC P81755). Expressed by the venom duct.

It is found in the secreted. This Conus litteratus (Lettered cone) protein is Conotoxin Lt5.9.